The sequence spans 284 residues: Tryptophan synthase alpha chain (284 aa).

Residues glutamate 59 and aspartate 70 each act as proton acceptor in the active site.

The protein belongs to the TrpA family. In terms of assembly, tetramer of two alpha and two beta chains.

It catalyses the reaction (1S,2R)-1-C-(indol-3-yl)glycerol 3-phosphate + L-serine = D-glyceraldehyde 3-phosphate + L-tryptophan + H2O. It functions in the pathway amino-acid biosynthesis; L-tryptophan biosynthesis; L-tryptophan from chorismate: step 5/5. In terms of biological role, the alpha subunit is responsible for the aldol cleavage of indoleglycerol phosphate to indole and glyceraldehyde 3-phosphate. This chain is Tryptophan synthase alpha chain, found in Azospirillum brasilense.